The primary structure comprises 952 residues: Inter-alpha-trypsin inhibitor heavy chain H5 (952 aa).

The signal sequence occupies residues 1 to 17 (MLLLLGLCLGLPLFSES). A VIT domain is found at 35–161 (VPRQLRLLQR…KAAFFLSYEE (127 aa)). 4 N-linked (GlcNAc...) asparagine glycosylation sites follow: N97, N127, N136, and N231. Over residues 113–131 (QKDKKSSESVKDKRNRTSD) the composition is skewed to basic and acidic residues. The disordered stretch occupies residues 113–138 (QKDKKSSESVKDKRNRTSDDNEENGS). Residues 295–478 (NVVFVLDISA…AQLIGFYDEI (184 aa)) enclose the VWFA domain. N-linked (GlcNAc...) asparagine glycosylation is found at N508, N776, N795, and N862. The interval 933-952 (ALGLSTPRKPETDRPHEESV) is disordered. Over residues 940–952 (RKPETDRPHEESV) the composition is skewed to basic and acidic residues.

This sequence belongs to the ITIH family.

The protein resides in the secreted. In terms of biological role, may act as a tumor suppressor. This is Inter-alpha-trypsin inhibitor heavy chain H5 (Itih5) from Mus musculus (Mouse).